A 585-amino-acid chain; its full sequence is Clathrin heavy chain linker domain-containing protein 1 (585 aa).

Residues 118-239 (QLEAKMRIID…DLRFRHQRLQ (122 aa)) are a coiled coil.

The chain is Clathrin heavy chain linker domain-containing protein 1 (Clhc1) from Rattus norvegicus (Rat).